The chain runs to 125 residues: S-adenosylmethionine decarboxylase proenzyme (125 aa).

Residue S71 is the Schiff-base intermediate with substrate; via pyruvic acid of the active site. Pyruvic acid (Ser); by autocatalysis is present on S71. Residue H76 is the Proton acceptor; for processing activity of the active site. Catalysis depends on C91, which acts as the Proton donor; for catalytic activity.

It belongs to the prokaryotic AdoMetDC family. Type 1 subfamily. Heterotetramer of two alpha and two beta chains arranged as a dimer of alpha/beta heterodimers. It depends on pyruvate as a cofactor. Is synthesized initially as an inactive proenzyme. Formation of the active enzyme involves a self-maturation process in which the active site pyruvoyl group is generated from an internal serine residue via an autocatalytic post-translational modification. Two non-identical subunits are generated from the proenzyme in this reaction, and the pyruvate is formed at the N-terminus of the alpha chain, which is derived from the carboxyl end of the proenzyme. The post-translation cleavage follows an unusual pathway, termed non-hydrolytic serinolysis, in which the side chain hydroxyl group of the serine supplies its oxygen atom to form the C-terminus of the beta chain, while the remainder of the serine residue undergoes an oxidative deamination to produce ammonia and the pyruvoyl group blocking the N-terminus of the alpha chain.

It catalyses the reaction S-adenosyl-L-methionine + H(+) = S-adenosyl 3-(methylsulfanyl)propylamine + CO2. The protein operates within amine and polyamine biosynthesis; S-adenosylmethioninamine biosynthesis; S-adenosylmethioninamine from S-adenosyl-L-methionine: step 1/1. Its function is as follows. Catalyzes the decarboxylation of S-adenosylmethionine to S-adenosylmethioninamine (dcAdoMet), the propylamine donor required for the synthesis of the polyamines spermine and spermidine from the diamine putrescine. The protein is S-adenosylmethionine decarboxylase proenzyme of Pyrobaculum arsenaticum (strain DSM 13514 / JCM 11321 / PZ6).